Reading from the N-terminus, the 528-residue chain is tRNA-2-methylthio-N(6)-dimethylallyladenosine synthase (528 aa).

Residues Arg19–His134 enclose the MTTase N-terminal domain. Cys28, Cys63, Cys97, Cys171, Cys175, and Cys178 together coordinate [4Fe-4S] cluster. One can recognise a Radical SAM core domain in the interval Arg157 to Glu387. The TRAM domain maps to Gln390–Asp460.

It belongs to the methylthiotransferase family. MiaB subfamily. Monomer. It depends on [4Fe-4S] cluster as a cofactor.

It localises to the cytoplasm. The enzyme catalyses N(6)-dimethylallyladenosine(37) in tRNA + (sulfur carrier)-SH + AH2 + 2 S-adenosyl-L-methionine = 2-methylsulfanyl-N(6)-dimethylallyladenosine(37) in tRNA + (sulfur carrier)-H + 5'-deoxyadenosine + L-methionine + A + S-adenosyl-L-homocysteine + 2 H(+). Functionally, catalyzes the methylthiolation of N6-(dimethylallyl)adenosine (i(6)A), leading to the formation of 2-methylthio-N6-(dimethylallyl)adenosine (ms(2)i(6)A) at position 37 in tRNAs that read codons beginning with uridine. In Clavibacter michiganensis subsp. michiganensis (strain NCPPB 382), this protein is tRNA-2-methylthio-N(6)-dimethylallyladenosine synthase.